Reading from the N-terminus, the 371-residue chain is DNA repair protein RAD14 (371 aa).

Positions 26 to 48 (LSSDQLNRIESRNEPLKTRPLAV) are disordered. Positions 32 to 42 (NRIESRNEPLK) are enriched in basic and acidic residues. Zn(2+)-binding residues include Cys191, Cys194, Cys213, and Cys216. A zinc finger spans residues 191–216 (CIECHINIEMDPVLHDVFKLQVCKQC).

It belongs to the XPA family. As to quaternary structure, two monomers bind to kinked/damaged DNA (construct with only the C-terminal DNA-binding domain). Component of the nucleotide excision repair factor 1 (NEF1) complex consisting of RAD1, RAD10 and RAD14.

The protein resides in the nucleus. Involved in nucleotide excision repair. Binds specifically to damaged DNA. Required for the incision step. This Saccharomyces cerevisiae (strain ATCC 204508 / S288c) (Baker's yeast) protein is DNA repair protein RAD14 (RAD14).